The primary structure comprises 182 residues: Ribosome maturation factor RimM (182 aa).

A PRC barrel domain is found at 101-174 (QDEYFIHQLY…QIVVRLLPGL (74 aa)).

The protein belongs to the RimM family. In terms of assembly, binds ribosomal protein uS19.

It localises to the cytoplasm. An accessory protein needed during the final step in the assembly of 30S ribosomal subunit, possibly for assembly of the head region. Essential for efficient processing of 16S rRNA. May be needed both before and after RbfA during the maturation of 16S rRNA. It has affinity for free ribosomal 30S subunits but not for 70S ribosomes. This Roseiflexus sp. (strain RS-1) protein is Ribosome maturation factor RimM.